We begin with the raw amino-acid sequence, 334 residues long: L-lactate dehydrogenase B chain (334 aa).

NAD(+) contacts are provided by residues 30 to 58 and arginine 100; that span reads GQVG…LEDK. Substrate-binding residues include arginine 107, asparagine 139, and arginine 170. Asparagine 139 is an NAD(+) binding site. Histidine 194 serves as the catalytic Proton acceptor. Threonine 249 is a binding site for substrate.

This sequence belongs to the LDH/MDH superfamily. LDH family. As to quaternary structure, homotetramer.

It is found in the cytoplasm. It catalyses the reaction (S)-lactate + NAD(+) = pyruvate + NADH + H(+). It participates in fermentation; pyruvate fermentation to lactate; (S)-lactate from pyruvate: step 1/1. Interconverts simultaneously and stereospecifically pyruvate and lactate with concomitant interconversion of NADH and NAD(+). The protein is L-lactate dehydrogenase B chain (ldhb) of Squalus acanthias (Spiny dogfish).